Reading from the N-terminus, the 782-residue chain is General transcription and DNA repair factor IIH helicase/translocase subunit XPB (782 aa).

Residues methionine 1–lysine 11 are compositionally biased toward basic and acidic residues. The segment at methionine 1–lysine 52 is disordered. Residues arginine 6 to glutamine 18 carry the Nuclear localization signal motif. The span at glutamate 20–proline 30 shows a compositional bias: acidic residues. Serine 34 carries the phosphoserine modification. The Helicase ATP-binding domain maps to phenylalanine 328 to tyrosine 489. Proline 341 to leucine 348 serves as a coordination point for ATP. Residues glutamate 442–threonine 445 carry the DEVH box motif. Residues alanine 543–phenylalanine 703 enclose the Helicase C-terminal domain. At serine 686 the chain carries Phosphoserine. A Phosphoserine; by CK2 modification is found at serine 751.

Belongs to the helicase family. RAD25/XPB subfamily. Component of the 7-subunit TFIIH core complex composed of XPB/ERCC3, XPD/ERCC2, GTF2H1, GTF2H2, GTF2H3, GTF2H4 and GTF2H5, which is active in NER. The core complex associates with the 3-subunit CDK-activating kinase (CAK) module composed of CCNH/cyclin H, CDK7 and MNAT1 to form the 10-subunit holoenzyme (holo-TFIIH) active in transcription. Interacts with PUF60. Interacts with ATF7IP. Interacts with KAT2A; leading to KAT2A recruitment to promoters and acetylation of histones. Part of TBP-based Pol II pre-initiation complex (PIC), in which Pol II core assembles with general transcription factors and other specific initiation factors including GTF2E1, GTF2E2, GTF2F1, GTF2F2, TCEA1, ERCC2, ERCC3, GTF2H2, GTF2H3, GTF2H4, GTF2H5, GTF2A1, GTF2A2, GTF2B and TBP; this large multi-subunit PIC complex mediates DNA unwinding and targets Pol II core to the transcription start site where the first phosphodiester bond forms. Phosphorylation on Ser-751 by CK2 controls the 5'-excision activity of ERCC1-XPF endonuclease; phosphorylated protein inhibits the excision activity and thus NER. Dephosphorylation reactivates the 5'-excision step. Phosphorylation has no effect on transcription or the 3'-5' helicase activity.

Its subcellular location is the nucleus. The enzyme catalyses Couples ATP hydrolysis with the unwinding of duplex DNA by translocating in the 3'-5' direction.. It catalyses the reaction ATP + H2O = ADP + phosphate + H(+). Phosphorylation on Ser-751 by CK2 controls the 5'-excision activity of ERCC1-XPF endonuclease; phosphorylated protein inhibits the excision activity and thus NER. ATPase activity is stimulated by TFIIH subunit p52 (GTF2H4). DNA translocase activity by this subunit in TFIIH is stimulated by XPA, ERCC5/XPG and XFP plus ERCC1. Functionally, ATP-dependent 3'-5' DNA helicase/translocase; binds dsDNA rather than ssDNA, unzipping it in a translocase rather than classical helicase activity. Component of the general transcription and DNA repair factor IIH (TFIIH) core complex. When complexed to CDK-activating kinase (CAK), involved in RNA transcription by RNA polymerase II. The ATPase activity of XPB/ERCC3, but not its helicase activity, is required for DNA opening; it may wrap around the damaged DNA wedging it open, causing localized melting and twisting that allows XPD/ERCC2 helicase to anchor. The ATP-dependent helicase activity of XPB/ERCC3 may be required for promoter escape. Also involved in transcription-coupled nucleotide excision repair (NER) of damaged DNA. In NER, TFIIH acts by opening DNA around the lesion to allow the excision of the damaged oligonucleotide and its replacement by a new DNA fragment. The structure of the TFIIH transcription complex differs from the NER-TFIIH complex; large movements by XPD/ERCC2 and XPB/ERCC3 are stabilized by XPA. This Rattus norvegicus (Rat) protein is General transcription and DNA repair factor IIH helicase/translocase subunit XPB (Ercc3).